We begin with the raw amino-acid sequence, 240 residues long: 31 kDa outer-membrane immunogenic protein (240 aa).

Positions 1–19 (MKSVILASIAAMFATSAMA) are cleaved as a signal peptide. An epitope recognized by the monoclonal antibody A59/10F09/G10 region spans residues 48 to 83 (NAGYAGGKFKHPFSSFDKEDNEQVSGSLDVTAGGFV).

This sequence belongs to the Omp25/RopB family. As to quaternary structure, oligomeric.

Its subcellular location is the cell outer membrane. Functionally, major outer membrane protein associated with peptidoglycans. May function as a porin. The polypeptide is 31 kDa outer-membrane immunogenic protein (omp31) (Brucella melitensis biotype 1 (strain ATCC 23456 / CCUG 17765 / NCTC 10094 / 16M)).